The primary structure comprises 110 residues: MITLDWEKANGLITTVVQDATTKQVLMVAYMNQESLAKTMATGETWFWSRSRKTLWHKGATSGNIQTVKTIAVDCDADTLLVTVDPAGPACHTGHISCFYRHYPEGKDLT.

D74 provides a ligand contact to Mg(2+). Position 75 (C75) interacts with Zn(2+). Mg(2+) is bound by residues D76 and D78. C91 and C98 together coordinate Zn(2+).

Belongs to the PRA-CH family. As to quaternary structure, homodimer. Mg(2+) serves as cofactor. The cofactor is Zn(2+).

Its subcellular location is the cytoplasm. It carries out the reaction 1-(5-phospho-beta-D-ribosyl)-5'-AMP + H2O = 1-(5-phospho-beta-D-ribosyl)-5-[(5-phospho-beta-D-ribosylamino)methylideneamino]imidazole-4-carboxamide. Its pathway is amino-acid biosynthesis; L-histidine biosynthesis; L-histidine from 5-phospho-alpha-D-ribose 1-diphosphate: step 3/9. Its function is as follows. Catalyzes the hydrolysis of the adenine ring of phosphoribosyl-AMP. The protein is Phosphoribosyl-AMP cyclohydrolase of Lacticaseibacillus casei (strain BL23) (Lactobacillus casei).